A 366-amino-acid chain; its full sequence is Ribosomal RNA large subunit methyltransferase M (366 aa).

Residues Ser188, Cys221–Gly224, Asp240, Asp260, and Asp277 contribute to the S-adenosyl-L-methionine site. The active-site Proton acceptor is the Lys306.

It belongs to the class I-like SAM-binding methyltransferase superfamily. RNA methyltransferase RlmE family. RlmM subfamily. In terms of assembly, monomer.

It is found in the cytoplasm. It carries out the reaction cytidine(2498) in 23S rRNA + S-adenosyl-L-methionine = 2'-O-methylcytidine(2498) in 23S rRNA + S-adenosyl-L-homocysteine + H(+). In terms of biological role, catalyzes the 2'-O-methylation at nucleotide C2498 in 23S rRNA. The chain is Ribosomal RNA large subunit methyltransferase M from Klebsiella pneumoniae (strain 342).